We begin with the raw amino-acid sequence, 569 residues long: AP-4 complex accessory subunit Tepsin (569 aa).

One can recognise an ENTH domain in the interval 8 to 141 (RDRLSFLHRL…FSDALPQPPS (134 aa)). Residues 196–298 (VRPGPDNPCT…SGASREPGDL (103 aa)) are disordered. A compositionally biased stretch (polar residues) spans 219–229 (VTPSASHTHPN). Residues 260–292 (SSPSSQNSSCTSNLSRASDSVSRSGSDSHSGAS) show a composition bias toward low complexity. Phosphoserine is present on Ser-400. Residues 467–524 (VPRSPVPTPSPDTLPPALQDPGELRTQLVCSSEPGTGSEQRLENTDTPKDSSSPCPWS) are disordered. Positions 470–480 (SPVPTPSPDTL) are enriched in pro residues. Residues 494 to 505 (LVCSSEPGTGSE) show a composition bias toward polar residues. The segment covering 506-515 (QRLENTDTPK) has biased composition (basic and acidic residues). The interval 525-535 (PNSLFAGMELV) is interaction with AP4B1. An interaction with AP4E1 region spans residues 559-569 (SEPSAFAFLNM).

In terms of assembly, interacts with AP4B1 and AP4E1; the interaction is direct and mediates the association of TEPSIN with the adapter-like complex 4 (AP-4), a heterotetramer composed of AP4B1, AP4E1, AP4M1 and AP4S1.

Its subcellular location is the golgi apparatus. It is found in the trans-Golgi network membrane. It localises to the cytoplasmic vesicle. The protein resides in the cytoplasm. The protein localises to the cytosol. Functionally, associates with the adapter-like complex 4 (AP-4) and may therefore play a role in vesicular trafficking of proteins at the trans-Golgi network. In Rattus norvegicus (Rat), this protein is AP-4 complex accessory subunit Tepsin.